We begin with the raw amino-acid sequence, 631 residues long: Probable glutamate--tRNA ligase, cytoplasmic (631 aa).

139–141 is an L-glutamate binding site; it reads RFP. The 'HIGH' region signature appears at 144-153; the sequence is PSGFLHIGHI. Position 149 (histidine 149) interacts with ATP. Residues aspartate 173, 311-315, and arginine 329 each bind L-glutamate; that span reads YDFAC. Residues glutamate 332 and 367 to 371 each bind ATP; that span reads VLSKR. A 'KMSKS' region motif is present at residues 367–371; that stretch reads VLSKR.

The protein belongs to the class-I aminoacyl-tRNA synthetase family. Glutamate--tRNA ligase type 2 subfamily.

Its subcellular location is the cytoplasm. It catalyses the reaction tRNA(Glu) + L-glutamate + ATP = L-glutamyl-tRNA(Glu) + AMP + diphosphate. The protein is Probable glutamate--tRNA ligase, cytoplasmic of Enterocytozoon bieneusi (strain H348) (Microsporidian parasite).